A 151-amino-acid polypeptide reads, in one-letter code: UPF0735 ACT domain-containing protein SERP1207 (151 aa).

Positions threonine 74–methionine 149 constitute an ACT domain.

It belongs to the UPF0735 family.

In Staphylococcus epidermidis (strain ATCC 35984 / DSM 28319 / BCRC 17069 / CCUG 31568 / BM 3577 / RP62A), this protein is UPF0735 ACT domain-containing protein SERP1207.